Reading from the N-terminus, the 86-residue chain is Small ribosomal subunit protein bS16 (86 aa).

This sequence belongs to the bacterial ribosomal protein bS16 family.

This is Small ribosomal subunit protein bS16 from Acidithiobacillus ferrooxidans (strain ATCC 23270 / DSM 14882 / CIP 104768 / NCIMB 8455) (Ferrobacillus ferrooxidans (strain ATCC 23270)).